A 677-amino-acid chain; its full sequence is UvrABC system protein B (677 aa).

The Helicase ATP-binding domain occupies aspartate 26–valine 414. Residue glycine 39–threonine 46 participates in ATP binding. A Beta-hairpin motif is present at residues tyrosine 92 to isoleucine 115. The 167-residue stretch at glutamine 432–methionine 598 folds into the Helicase C-terminal domain. Positions methionine 637–glutamine 672 constitute a UVR domain.

This sequence belongs to the UvrB family. As to quaternary structure, forms a heterotetramer with UvrA during the search for lesions. Interacts with UvrC in an incision complex.

It localises to the cytoplasm. Functionally, the UvrABC repair system catalyzes the recognition and processing of DNA lesions. A damage recognition complex composed of 2 UvrA and 2 UvrB subunits scans DNA for abnormalities. Upon binding of the UvrA(2)B(2) complex to a putative damaged site, the DNA wraps around one UvrB monomer. DNA wrap is dependent on ATP binding by UvrB and probably causes local melting of the DNA helix, facilitating insertion of UvrB beta-hairpin between the DNA strands. Then UvrB probes one DNA strand for the presence of a lesion. If a lesion is found the UvrA subunits dissociate and the UvrB-DNA preincision complex is formed. This complex is subsequently bound by UvrC and the second UvrB is released. If no lesion is found, the DNA wraps around the other UvrB subunit that will check the other stand for damage. This is UvrABC system protein B from Idiomarina loihiensis (strain ATCC BAA-735 / DSM 15497 / L2-TR).